Consider the following 955-residue polypeptide: Glycine dehydrogenase (decarboxylating) (955 aa).

Residue K702 is modified to N6-(pyridoxal phosphate)lysine.

This sequence belongs to the GcvP family. In terms of assembly, the glycine cleavage system is composed of four proteins: P, T, L and H. Pyridoxal 5'-phosphate is required as a cofactor.

It catalyses the reaction N(6)-[(R)-lipoyl]-L-lysyl-[glycine-cleavage complex H protein] + glycine + H(+) = N(6)-[(R)-S(8)-aminomethyldihydrolipoyl]-L-lysyl-[glycine-cleavage complex H protein] + CO2. Functionally, the glycine cleavage system catalyzes the degradation of glycine. The P protein binds the alpha-amino group of glycine through its pyridoxal phosphate cofactor; CO(2) is released and the remaining methylamine moiety is then transferred to the lipoamide cofactor of the H protein. The protein is Glycine dehydrogenase (decarboxylating) of Bradyrhizobium diazoefficiens (strain JCM 10833 / BCRC 13528 / IAM 13628 / NBRC 14792 / USDA 110).